We begin with the raw amino-acid sequence, 86 residues long: MKLLYLLLTLAIIFVLTIVHAPNVEAKALADPESDAVGFADAFGDADAEATGGLGRLIGKIAKKGAKIAAEAAANAAAEKAAEALG.

The signal sequence occupies residues 1-26; that stretch reads MKLLYLLLTLAIIFVLTIVHAPNVEA. Positions 27–52 are excised as a propeptide; that stretch reads KALADPESDAVGFADAFGDADAEATG. Leucine amide is present on Leu85.

This sequence belongs to the formicidae venom precursor-01 superfamily. In terms of tissue distribution, expressed by the venom gland. This toxin is detected along the entire venom gland, as well as in the venom reservoir, the venom duct and in the venom. No toxin are detected in the Dufour's gland.

It is found in the secreted. It localises to the target cell membrane. Functionally, toxin that may interact with target cell membranes, producing a concentration-dependent leak in ion conductance, possibly via multimeric pore formation. It produces an immediate sharp increase of calcium concentration in all DRG neurons. This influx in calcium stabilizes without resulting in any observable dye leakage, showing that the effect is not simply cytolytic. This toxin may be one of the major contributors to the pain associated with envenomation. The toxin also displays a weak cytotoxicity (on HEK cells) and some antimicrobial activity (MIC=2.5 uM on C.neoformans (var. grubii), MIC=10.2 uM on S.aureus), but is not hemolytic to human erythtrocytes. In vivo, intraplantar injection into mice causes spontaneous nocifensive behavior (licking, flinching, or shaking of the paw), which lasts 5-7 minutes (10 and 100 uM tested). Mechanical and heat hypoalgesia are observed at 20 and 25 minutes after injection (highest dose tested of 100 uM). In vivo, injection into crickets (A.domesticus) causes an immediate, dose-dependent, reversible and nonlethal incapacitation that lasts about 53 minutes at the highest dose tested (60 ug/g). This is U-myrmeciitoxin(01)-Mg1a from Myrmecia gulosa (Red bulldog ant).